The primary structure comprises 702 residues: Methionine--tRNA ligase (702 aa).

The short motif at 14–24 is the 'HIGH' region element; sequence PYANGPVHLGH. Zn(2+) contacts are provided by Cys-146, Cys-149, Cys-159, and Cys-162. A 'KMSKS' region motif is present at residues 344-348; it reads KFSKS. Lys-347 provides a ligand contact to ATP. A tRNA-binding domain is found at 601–702; sequence DFLKVDLRVA…GDEINGQQIQ (102 aa).

This sequence belongs to the class-I aminoacyl-tRNA synthetase family. MetG type 1 subfamily. In terms of assembly, homodimer. The cofactor is Zn(2+).

The protein resides in the cytoplasm. The enzyme catalyses tRNA(Met) + L-methionine + ATP = L-methionyl-tRNA(Met) + AMP + diphosphate. Is required not only for elongation of protein synthesis but also for the initiation of all mRNA translation through initiator tRNA(fMet) aminoacylation. The polypeptide is Methionine--tRNA ligase (Chlorobium limicola (strain DSM 245 / NBRC 103803 / 6330)).